Reading from the N-terminus, the 756-residue chain is 3-O-alpha-D-glucosyl-L-rhamnose phosphorylase (756 aa).

A substrate-binding site is contributed by 358–359 (WD). The Proton donor role is filled by Glu486. Residue 590-591 (KQ) coordinates substrate.

This sequence belongs to the glycosyl hydrolase 65 family. In terms of assembly, monomer.

The protein localises to the cytoplasm. The catalysed reaction is 3-O-alpha-D-glucosyl-L-rhamnose + phosphate = beta-D-glucose 1-phosphate + L-rhamnopyranose. Functionally, phosphorylase showing strict alpha-1,3-regioselectivity and producing 3-O-alpha-D-glucopyranosyl-L-rhamnopyranose. Specific for L-rhamnose as acceptor and beta-D-glucose 1-phosphate as donor. Does not phosphorylate alpha,alpha-trehalose, kojibiose, nigerose, or maltose. The sequence is that of 3-O-alpha-D-glucosyl-L-rhamnose phosphorylase from Lachnoclostridium phytofermentans (strain ATCC 700394 / DSM 18823 / ISDg) (Clostridium phytofermentans).